Consider the following 503-residue polypeptide: CDK5 regulatory subunit-associated protein 3 (503 aa).

Short sequence motifs (shuffled ATG8-binding motif) lie at residues 266–269 (IDWG), 288–291 (IDWG), and 306–309 (IDWG). The tract at residues 268-503 (WGDFGVEAVS…RPVNLMGTSL (236 aa)) is required for interaction with UFL1 and mediates interaction with CHEK1. An RPL10a-binding domain (RBD) region spans residues 352-367 (DELMELEIFLSQRAVE). K447 is covalently cross-linked (Glycyl lysine isopeptide (Lys-Gly) (interchain with G-Cter in SUMO2)).

This sequence belongs to the CDK5RAP3 family. As to quaternary structure, substrate adapter component of the UFM1 ribosome E3 ligase (UREL) complex, composed of UFL1, DDRGK1 and CDK5RAP3. Interaction with UFL1 anchors CDK5RAP3 in the cytoplasm, preventing its translocation to the nucleus which allows expression of the CCND1 cyclin and progression of cells through the G1/S transition. Interacts with ATG8 family proteins MAP1LC3A, MAP1LC3B, GABARAP, GABARAPL1 and GABARAPL2. Interacts with CDK5R1; competes with CDK5RAP1 and CDK5RAP2. Interacts with RELA. Interacts with CHEK1; may negatively regulate CHEK1 and thereby stimulate entry into mitosis. Interacts with CDKN2A/ARF and MDM2; forms a ternary complex involved in regulation of p53/TP53. Interacts with MAPK14. Interacts with CCNB1. Interacts with TUBG1; may regulate CDK5RAP3 in mitotic G2/M transition checkpoint. May be phosphorylated by CDK5. In terms of processing, ubiquitinated. Probably triggers proteasomal degradation and is negatively regulated by UFL1. Post-translationally, may be ufmylated. Cleaved by caspases early during apoptosis, the resulting peptides may play a role in rupture of the nuclear envelope. In terms of tissue distribution, widely expressed with higher expression in secretory tissues.

The protein resides in the endoplasmic reticulum membrane. It localises to the cytoplasm. Its subcellular location is the nucleus. The protein localises to the cytoskeleton. It is found in the microtubule organizing center. The protein resides in the centrosome. Substrate adapter of E3 ligase complexes mediating ufmylation, the covalent attachment of the ubiquitin-like modifier UFM1 to substrate proteins, and which is involved in various processes, such as ribosome recycling and reticulophagy (also called ER-phagy). As part of the UREL complex, plays a key role in ribosome recycling by promoting mono-ufmylation of RPL26/uL24 subunit of the 60S ribosome. Ufmylation of RPL26/uL24 occurs on free 60S ribosomes following ribosome dissociation: it weakens the junction between post-termination 60S subunits and SEC61 translocons, promoting release and recycling of the large ribosomal subunit from the endoplasmic reticulum membrane. Ufmylation of RPL26/uL24 and subsequent 60S ribosome recycling either take place after normal termination of translation or after ribosome stalling during cotranslational translocation at the endoplasmic reticulum. Within the UREL complex, CDK5RAP3 acts as a substrate adapter that constrains UFL1 ligase activity to mono-ufmylate RPL26/uL24 at 'Lys-134'. The UREL complex is also involved in reticulophagy in response to endoplasmic reticulum stress by promoting ufmylation of proteins such as CYB5R3, thereby promoting lysosomal degradation of ufmylated proteins. Also acts as a regulator of transcription: negatively regulates NF-kappa-B-mediated gene transcription through the control of RELA phosphorylation. Also regulates mitotic G2/M transition checkpoint and mitotic G2 DNA damage checkpoint. Through its interaction with CDKN2A/ARF and MDM2 may induce MDM2-dependent p53/TP53 ubiquitination, stabilization and activation in the nucleus, thereby promoting G1 cell cycle arrest and inhibition of cell proliferation. May also play a role in the rupture of the nuclear envelope during apoptosis. May regulate MAPK14 activity by regulating its dephosphorylation by PPM1D/WIP1. Required for liver development. The protein is CDK5 regulatory subunit-associated protein 3 of Mus musculus (Mouse).